A 232-amino-acid polypeptide reads, in one-letter code: Ribosomal RNA small subunit methyltransferase G (232 aa).

S-adenosyl-L-methionine is bound by residues Gly93, Leu98, 144–145 (VE), and Arg163.

This sequence belongs to the methyltransferase superfamily. RNA methyltransferase RsmG family.

Its subcellular location is the cytoplasm. The enzyme catalyses guanosine(527) in 16S rRNA + S-adenosyl-L-methionine = N(7)-methylguanosine(527) in 16S rRNA + S-adenosyl-L-homocysteine. Functionally, specifically methylates the N7 position of guanine in position 527 of 16S rRNA. This chain is Ribosomal RNA small subunit methyltransferase G, found in Burkholderia pseudomallei (strain 668).